Reading from the N-terminus, the 228-residue chain is Extracellular protease inhibitor 10 (228 aa).

Positions 1–22 (MKSAFTLSLALVAVTATISAAA) are cleaved as a signal peptide. Kazal-like domains lie at 23–72 (DDNC…ECAS), 90–127 (TSGT…AKCK), and 156–208 (GYQG…EGTL). N-linked (GlcNAc...) asparagine glycosylation occurs at asparagine 25. 3 disulfide bridges follow: cysteine 26-cysteine 56, cysteine 30-cysteine 49, and cysteine 38-cysteine 70. The interval 69–92 (ECASTPASSATPSPVTSSTGSTSG) is disordered. Residues 71 to 92 (ASTPASSATPSPVTSSTGSTSG) show a composition bias toward low complexity. Cystine bridges form between cysteine 96/cysteine 126, cysteine 100/cysteine 119, cysteine 162/cysteine 193, and cysteine 167/cysteine 186. The N-linked (GlcNAc...) asparagine glycan is linked to asparagine 199.

In terms of assembly, interacts with host subtilisin-like protease P69B.

The protein resides in the secreted. In terms of biological role, secreted effector that interacts with and inhibits the pathogenesis-related P69B subtilisin-like serine protease of host tomato. Inhibition of host proteases by a pathogen extracellular protease inhibitor forms a specific type of defense-counterdefense mechanism between plants and microbial pathogens. In Phytophthora infestans (strain T30-4) (Potato late blight agent), this protein is Extracellular protease inhibitor 10.